Reading from the N-terminus, the 391-residue chain is Adaptive-response sensory kinase SasA (391 aa).

One can recognise a Histidine kinase domain in the interval 169-391; it reads MLAHDLRSPL…CFHFTLPVCR (223 aa). The residue at position 172 (His-172) is a Phosphohistidine; by autocatalysis.

Homooligomerizes. Interacts with KaiC. Participates in the KaiABC clock complex, whose core is composed of a KaiC homohexamer, 6 KaiB and up to 6 KaiA dimers. SasA and KaiB(fs) compete to bind to KaiC.

The catalysed reaction is ATP + protein L-histidine = ADP + protein N-phospho-L-histidine.. Its function is as follows. Member of the two-component regulatory system SasA/RpaA involved in genome-wide circadian gene expression. One of several clock output pathways. Participates in the Kai clock protein complex, the main circadian regulator in cyanobacteria, via its interaction with KaiC. KaiC enhances the autophosphorylation activity of SasA, which then transfers its phosphate group to RpaA to activate it. In addition to its output function, recruits fold-shifted KaiB (KaiB(fs)) to KaiC to cooperatively form the KaiB(6):KaiC(6) complex (independent of SasA kinase activity). Required for robustness of the circadian rhythm of gene expression and is involved in clock output, also required for adaptation to light/dark cycles. The polypeptide is Adaptive-response sensory kinase SasA (Rippkaea orientalis (strain PCC 8801 / RF-1) (Cyanothece sp. (strain PCC 8801))).